The primary structure comprises 247 residues: MADS-box protein defh21 (247 aa).

An MADS-box domain is found at 1–61 (MGRGKIEVKR…GKLTEYCTPP (61 aa)). Residues 91–183 (NDQVIKELTR…WLMSNQIQRQ (93 aa)) enclose the K-box domain.

Expressed exclusively in a few inner cell layers of the inner integuments of the ovules.

Its subcellular location is the nucleus. Its function is as follows. Probable transcription factor. The protein is MADS-box protein defh21 (DEFH21) of Antirrhinum majus (Garden snapdragon).